The following is a 1328-amino-acid chain: WASH complex subunit 2 (1328 aa).

The segment at M1–D219 is sufficient for interaction with WASHC3, WASHC4 and WASHC5; required for interaction with WASHC1. S157, S159, S204, S205, and S209 each carry phosphoserine. Residues G201–D213 are compositionally biased toward low complexity. 2 disordered regions span residues G201–L655 and K675–T830. Composition is skewed to acidic residues over residues D219–D231 and S248–E273. Position 283 is a phosphoserine (S283). The segment covering L288–A323 has biased composition (basic and acidic residues). T321 bears the Phosphothreonine mark. The interval S346–Q592 is sufficient for interaction with CCDC93. The interval R347–Q1328 is interaction with VPS35. An LFa 1 motif is present at residues L357 to F367. A phosphoserine mark is found at S384 and S387. 2 short sequence motifs (LFa) span residues L440–F455 and I474–F483. Over residues F441 to N453 the composition is skewed to acidic residues. Over residues T508–G528 the composition is skewed to polar residues. 2 consecutive short sequence motifs (LFa) follow at residues L529–F540 and L564–F575. Phosphoserine occurs at positions 531 and 536. The segment covering L539 to S556 has biased composition (low complexity). Residues K582–Q592 show a composition bias toward polar residues. A phosphoserine mark is found at S610 and S611. Positions A627 to D638 are enriched in basic and acidic residues. 2 consecutive short sequence motifs (LFa) follow at residues L655 to F667 and L683 to F695. A compositionally biased stretch (polar residues) spans S690–P699. 5 positions are modified to phosphoserine: S720, S744, S749, S780, and S795. The segment covering F797–S808 has biased composition (acidic residues). Short sequence motifs (LFa) lie at residues V832–F840 and D849–F855. 2 disordered regions span residues L863–S940 and P991–V1088. 2 positions are modified to phosphoserine: S867 and S870. The LFa 10 motif lies at L871 to F881. A compositionally biased stretch (basic and acidic residues) spans P894–W919. An interaction with phospholipids region spans residues Q925–Q1328. Basic residues predominate over residues N1016–R1034. The tract at residues K1017–R1035 is required for interaction with F-actin-capping protein subunit alpha (CAPZA1 or CAPZA2 or CAPZA3). 4 positions are modified to phosphoserine: S1042, S1060, S1077, and S1102. The tract at residues A1115–H1210 is disordered. 3 consecutive short sequence motifs (LFa) follow at residues L1117–F1124, V1157–F1171, and L1187–F1195. S1162 and S1165 each carry phosphoserine. A compositionally biased stretch (basic and acidic residues) spans A1196–H1210. 3 consecutive short sequence motifs (LFa) follow at residues I1220 to F1226, L1249 to F1257, and M1277 to F1286. Residues G1289–S1310 form a disordered region. An LFa 17 motif is present at residues I1317–F1325. S1327 bears the Phosphoserine mark.

The protein belongs to the FAM21 family. As to quaternary structure, component of the WASH core complex also described as WASH regulatory complex (SHRC) composed of WASHC1, WASHC2, WASHC3, WASHC4 and WASHC5; in the complex interacts (via N-terminus) directly with WASHC1. The WASH core complex associates with the F-actin-capping protein dimer (formed by CAPZA1, CAPZA2 or CAPZA3 and CAPZB) in a transient or substoichiometric manner which was initially described as WASH complex. Interacts with VPS35; mediates the association with the retromer CSC complex. Interacts with FKBP15. Interacts with CCDC93, CCDC22, VPS35L; indicative for an association of the WASH core complex with the CCC and retriever complexes. Directly interacts with TBC1D23.

The protein localises to the early endosome membrane. It localises to the cell membrane. Its function is as follows. Acts as a component of the WASH core complex that functions as a nucleation-promoting factor (NPF) at the surface of endosomes, where it recruits and activates the Arp2/3 complex to induce actin polymerization, playing a key role in the fission of tubules that serve as transport intermediates during endosome sorting. Mediates the recruitment of the WASH core complex to endosome membranes via binding to phospholipids and VPS35 of the retromer CSC. Mediates the recruitment of the F-actin-capping protein dimer to the WASH core complex probably promoting localized F-actin polymerization needed for vesicle scission. Via its C-terminus binds various phospholipids, most strongly phosphatidylinositol 4-phosphate (PtdIns-(4)P), phosphatidylinositol 5-phosphate (PtdIns-(5)P) and phosphatidylinositol 3,5-bisphosphate (PtdIns-(3,5)P2). Involved in the endosome-to-plasma membrane trafficking and recycling of SNX27-retromer-dependent cargo proteins, such as GLUT1. Required for the association of DNAJC13, ENTR1, ANKRD50 with retromer CSC subunit VPS35. Required for the endosomal recruitment of CCC and retriever complexes subunits COMMD1 and CCDC93 as well as the retrievere complex subunit VPS35L. The chain is WASH complex subunit 2 from Rattus norvegicus (Rat).